The chain runs to 3033 residues: Genome polyprotein (3033 aa).

Position 2 is an N-acetylserine; by host (serine 2). The interaction with STAT1 stretch occupies residues 2–23; sequence STNPKPQRKTKRNTNRRPEDVK. Positions 2-58 are interaction with EIF2AK2/PKR; sequence STNPKPQRKTKRNTNRRPEDVKFPGGGQIVGGVYLLPRRGPRLGVRTTRKTSERSQP. Residues 2–59 form an interaction with DDX3X region; sequence STNPKPQRKTKRNTNRRPEDVKFPGGGQIVGGVYLLPRRGPRLGVRTTRKTSERSQPR. Residues 2–75 form a disordered region; it reads STNPKPQRKT…PKDRRSTGKA (74 aa). At 2–168 the chain is on the cytoplasmic side; sequence STNPKPQRKT…EDGVNYATGN (167 aa). 2 short sequence motifs (nuclear localization signal) span residues 5 to 13 and 38 to 43; these read PKPQRKTKR and PRRGPR. Basic residues predominate over residues 7–16; the sequence is PQRKTKRNTN. Low complexity predominate over residues 32–47; it reads GGVYLLPRRGPRLGVR. At serine 53 the chain carries Phosphoserine; by host. 2 consecutive short sequence motifs (nuclear localization signal) follow at residues 58–64 and 66–71; these read PRGRRQP and PKDRRS. Position 99 is a phosphoserine; by host (serine 99). The tract at residues 112–152 is important for endoplasmic reticulum and mitochondrial localization; the sequence is PRHRSRNVGKVIDTLTCGFADLMGYIPVVGAPLSGAARAVA. Serine 116 is modified (phosphoserine; by host PKA). The interval 122-173 is interaction with APOA2; that stretch reads VIDTLTCGFADLMGYIPVVGAPLSGAARAVAHGVRVLEDGVNYATGNLPGFP. Positions 164 to 167 are important for lipid droplets localization; that stretch reads YATG. A helical membrane pass occupies residues 169-189; sequence LPGFPFSIFLLALLSCITVPV. Residues 178-191 constitute a propeptide, ER anchor for the core protein, removed in mature form by host signal peptidase; the sequence is LLALLSCITVPVSA. The Lumenal segment spans residues 190 to 358; sequence SAAQVKNTSS…SGAHWGVMFG (169 aa). 3 N-linked (GlcNAc...) asparagine; by host glycosylation sites follow: asparagine 196, asparagine 209, and asparagine 234. Positions 265-296 are important for fusion; it reads VVMSATFCSALYVGDLCGGVMLAAQVFIVSPQ. Asparagine 305 carries an N-linked (GlcNAc...) asparagine; by host glycan. The helical transmembrane segment at 359–379 threads the bilayer; it reads LAYFSMQGAWAKVIVILLLAA. The Lumenal portion of the chain corresponds to 380-729; the sequence is GVDAGTTTVG…WEWVVLLFLL (350 aa). The interval 385–411 is HVR1; the sequence is TTTVGGAVARSTNVIAGVFSHGPQQNI. Asparagine 417, asparagine 423, asparagine 430, and asparagine 448 each carry an N-linked (GlcNAc...) (high mannose) asparagine; by host glycan. Disulfide bonds link cysteine 429/cysteine 554, cysteine 452/cysteine 459, cysteine 488/cysteine 496, and cysteine 505/cysteine 510. Asparagine 477 is a glycosylation site (N-linked (GlcNAc...) (high mannose) asparagine; by host). The segment at 484–496 is CD81-binding 1; it reads MRPYCWHYPPKPC. Residues 524–555 are CD81-binding 2; it reads RGVPTYTWGENETDVFLLNSTRPPQGSWFGCT. N-linked (GlcNAc...) (high mannose) asparagine; by host glycosylation is found at asparagine 534, asparagine 542, and asparagine 558. A disulfide bridge connects residues cysteine 566 and cysteine 571. Asparagine 578 carries an N-linked (GlcNAc...) (high mannose) asparagine; by host glycan. Intrachain disulfides connect cysteine 585–cysteine 589, cysteine 601–cysteine 624, and cysteine 611–cysteine 648. N-linked (GlcNAc...) (high mannose) asparagine; by host glycans are attached at residues asparagine 627 and asparagine 649. A disulfide bridge connects residues cysteine 656 and cysteine 681. The segment at 664 to 675 is EIF2AK2/eIF2-alpha phosphorylation homology domain (PePHD); sequence SQLSPLLHSTTE. The helical transmembrane segment at 730–750 threads the bilayer; it reads LADARVCACLWMLILLGQAEA. At 751–761 the chain is on the lumenal side; that stretch reads ALEKLVVLHAA. Residues 762–782 form a helical membrane-spanning segment; sequence SAANCHGLLYFAIFFVAAWHI. The Cytoplasmic portion of the chain corresponds to 783–785; the sequence is RGR. Residues 786–807 form a helical membrane-spanning segment; that stretch reads VVPLTTYCLTGLWPFCLLLMAL. At 808–817 the chain is on the lumenal side; that stretch reads PRQAYAYDAP. Residues 818–838 form a helical membrane-spanning segment; it reads VHGQIGVGLLILITLFTLTPG. At 839 to 842 the chain is on the cytoplasmic side; it reads YKTL. The chain crosses the membrane as a helical span at residues 843–863; that stretch reads LGQCLWWLCYLLTLGEAMIQE. The Lumenal portion of the chain corresponds to 864–885; it reads WVPPMQVRGGRDGIAWAVTIFC. Residues 886–906 form a helical membrane-spanning segment; sequence PGVVFDITKWLLALLGPAYLL. A Peptidase C18 domain is found at 907-1030; sequence RAALTHVPYF…GYTSKGWKLL (124 aa). Residues 907–1661 are Cytoplasmic-facing; that stretch reads RAALTHVPYF…CMQADLEVMT (755 aa). The interval 908–1210 is protease NS2-3; sequence AALTHVPYFV…PVETLDVVTR (303 aa). Residue cysteine 926 is the site of S-palmitoyl cysteine; by host attachment. The interaction with human SCPS1 stretch occupies residues 933–953; it reads AGGRYVQVALLALGRWTGTYI. Residues histidine 956, glutamate 976, and cysteine 997 each act as for protease NS2 activity; shared with dimeric partner in the active site. In terms of domain architecture, Peptidase S29 spans 1031–1212; that stretch reads APITAYAQQT…ETLDVVTRSP (182 aa). Catalysis depends on charge relay system; for serine protease NS3 activity residues histidine 1087 and aspartate 1111. Positions 1127 and 1129 each coordinate Zn(2+). Serine 1169 (charge relay system; for serine protease NS3 activity) is an active-site residue. Cysteine 1175 and histidine 1179 together coordinate Zn(2+). The Helicase ATP-binding domain occupies 1221–1373; sequence PAVPQTYQVG…PDIEEVGLGR (153 aa). 1234–1241 is a binding site for ATP; that stretch reads APTGSGKS. Mg(2+)-binding residues include serine 1241 and glutamate 1321. The DECH box signature appears at 1320–1323; that stretch reads DECH. The disordered stretch occupies residues 1481-1501; sequence VPQDAVSRSQRRGRTGRGRQG. The segment at 1490–1501 is RNA-binding; it reads QRRGRTGRGRQG. Residues 1662 to 1682 traverse the membrane as a helical segment; sequence STWVLAGGVLAAVAAYCLATG. The NS3-binding stretch occupies residues 1683-1694; it reads CVSIIGRLHVNQ. At 1683–1809 the chain is on the cytoplasmic side; the sequence is CVSIIGRLHV…ALTSPLSTST (127 aa). Residues 1810–1830 traverse the membrane as a helical segment; sequence TILLNIMGGWLASQIAPPAGA. Over 1831–1832 the chain is Lumenal; the sequence is TG. A helical membrane pass occupies residues 1833-1853; sequence FVVSGLVGAAVGSIGLGKVLV. The segment at 1837-1865 is glycine zipper; that stretch reads GLVGAAVGSIGLGKVLVDILAGYGAGISG. Aspartate 1854 is a topological domain (cytoplasmic). The helical transmembrane segment at 1855–1875 threads the bilayer; that stretch reads ILAGYGAGISGALVAFKIMSG. Residues 1876 to 1885 are Lumenal-facing; sequence EKPSMEDVIN. The helical transmembrane segment at 1886 to 1906 threads the bilayer; that stretch reads LLPGILSPGALVVGVICAAIL. Residues 1907–1976 are Cytoplasmic-facing; the sequence is RRHVGPGEGA…WITEDCPIPC (70 aa). Cysteine 1972 carries S-palmitoyl cysteine; by host lipidation. Residue cysteine 1976 is the site of S-palmitoyl cysteine; by host; partial attachment. The stretch at 1977–2007 is an intramembrane region; that stretch reads SGSWLRDVWDWVCTILTDFKNWLTSKLFPKL. A membrane-binding region spans residues 1982–2002; the sequence is RDVWDWVCTILTDFKNWLTSK. The Cytoplasmic portion of the chain corresponds to 2008–3012; the sequence is PGLPFISCQK…FHSVSRARPR (1005 aa). Residues 2009–2225 are D1; RNA-binding; sequence GLPFISCQKG…RATCTTHSNT (217 aa). Residues cysteine 2015, cysteine 2033, cysteine 2035, and cysteine 2056 each contribute to the Zn(2+) site. The residue at position 2069 (tyrosine 2069) is a Phosphotyrosine; by host. An FKBP8-binding region spans residues 2124–2212; sequence EFFSWVDGVQ…ASSSVSQLSA (89 aa). Residues 2124 to 2332 form a transcriptional activation region; that stretch reads EFFSWVDGVQ…PTPPPRRRRT (209 aa). Positions 2139–2143 are interaction with non-structural protein 4A; sequence PTPKP. Residues 2192 to 2213 are disordered; it reads RRLARGSPPSEASSSVSQLSAP. Low complexity predominate over residues 2196 to 2213; it reads RGSPPSEASSSVSQLSAP. Serine 2198 is modified (phosphoserine; by host; in p56). Phosphoserine; by host; in p58 is present on serine 2201. Phosphoserine; by host; in p56 and p58, regulates intracellular NS5A distribution is present on serine 2205. 3 positions are modified to phosphoserine; by host; in p58: serine 2208, serine 2211, and serine 2214. Positions 2210–2249 are ISDR; it reads LSAPSLRATCTTHSNTYDVDMVDANLLMEGGVAQTEPESR. An interaction with EIF2AK2/PKR region spans residues 2214–2275; it reads SLRATCTTHS…LEPSIPSECM (62 aa). The segment at 2227–2315 is D2; that stretch reads DVDMVDANLL…YQPPTVAGCA (89 aa). The segment at 2228-2315 is disordered; that stretch reads VDMVDANLLM…YQPPTVAGCA (88 aa). The NS4B-binding stretch occupies residues 2249 to 2306; the sequence is RVPVLDFLEPMAEEESDLEPSIPSECMLPRSGFPRALPAWARPDYNPPLVESWRRPDY. Residues 2281–2297 are interaction with human PPIA/CYPA; sequence FPRALPAWARPDYNPPL. Over residues 2316 to 2326 the composition is skewed to pro residues; the sequence is LPPPKKAPTPP. An SH3-binding motif is present at residues 2322-2325; it reads APTP. Threonine 2324 carries the post-translational modification Phosphothreonine; by host. The short motif at 2326–2334 is the Nuclear localization signal element; the sequence is PPRRRRTVG. The tract at residues 2329–2442 is D3; that stretch reads RRRTVGLSES…SEEDDTTVCC (114 aa). The interaction with host IFI27 stretch occupies residues 2336–2447; the sequence is SESTISEALQ…TTVCCSMSYS (112 aa). A Glycyl lysine isopeptide (Lys-Gly) (interchain with G-Cter in ubiquitin) cross-link involves residue lysine 2350. Positions 2352 to 2432 are disordered; it reads FGQPPSSGDA…GSGSGSWSTC (81 aa). Positions 2355–2379 are enriched in low complexity; it reads PPSSGDAGSSTGAGAAESGGPTSPG. Residues 2358–2381 are V3; the sequence is SGDAGSSTGAGAAESGGPTSPGEP. The interaction with host VAPB stretch occupies residues 2371–2439; the sequence is ESGGPTSPGE…STCSEEDDTT (69 aa). The span at 2398-2408 shows a compositional bias: acidic residues; sequence EPGDPDLESDQ. A compositionally biased stretch (gly residues) spans 2417 to 2426; the sequence is GGGVAPGSGS. The RdRp catalytic domain maps to 2656-2774; that stretch reads PMGFSYDTRC…ISESQGTEED (119 aa). Aspartate 2662, aspartate 2760, and aspartate 2761 together coordinate Mg(2+). Residues 3013-3033 traverse the membrane as a helical segment; it reads SLLFGLLLLFVGVGLFLLPAR.

Belongs to the hepacivirus polyprotein family. In terms of assembly, homooligomer. Interacts with E1 (via C-terminus). Interacts with the non-structural protein 5A. Interacts (via N-terminus) with host STAT1 (via SH2 domain); this interaction results in decreased STAT1 phosphorylation and ubiquitin-mediated proteasome-dependent STAT1 degradation, leading to decreased IFN-stimulated gene transcription. Interacts with host STAT3; this interaction constitutively activates STAT3. Interacts with host LTBR receptor. Interacts with host TNFRSF1A receptor and possibly induces apoptosis. Interacts with host HNRPK. Interacts with host YWHAE. Interacts with host UBE3A/E6AP. Interacts with host DDX3X. Interacts with host APOA2. Interacts with host RXRA protein. Interacts with host SP110 isoform 3/Sp110b; this interaction sequesters the transcriptional corepressor SP110 away from the nucleus. Interacts with host CREB3 nuclear transcription protein; this interaction triggers cell transformation. Interacts with host ACY3. Interacts with host C1QR1. Interacts with host RBM24; this interaction, which enhances the interaction of the mature core protein with 5'-UTR, may inhibit viral translation and favor replication. Interacts (via N-terminus) with host EIF2AK2/PKR (via N-terminus); this interaction induces the autophosphorylation of EIF2AK2. Part of the viral assembly initiation complex composed of NS2, E1, E2, NS3, NS4A, NS5A and the mature core protein. As to quaternary structure, forms a heterodimer with envelope glycoprotein E2. Interacts with mature core protein. Interacts with protease NS2. The heterodimer E1/E2 interacts with host CLDN1; this interaction plays a role in viral entry into host cell. Interacts with host SPSB2 (via C-terminus). Part of the viral assembly initiation complex composed of NS2, E1, E2, NS3, NS4A, NS5A and the mature core protein. Forms a heterodimer with envelope glycoprotein E1. Interacts with host CD81 and SCARB1 receptors; these interactions play a role in viral entry into host cell. Interacts with host EIF2AK2/PKR; this interaction inhibits EIF2AK2 and probably allows the virus to evade the innate immune response. Interacts with host CD209/DC-SIGN and CLEC4M/DC-SIGNR. Interact with host SPCS1; this interaction is essential for viral particle assembly. Interacts with protease NS2. The heterodimer E1/E2 interacts with host CLDN1; this interaction plays a role in viral entry into host cell. Part of the viral assembly initiation complex composed of NS2, E1, E2, NS3, NS4A, NS5A and the mature core protein. Interacts with host SLC3A2/4F2hc; the interaction may facilitate viral entry into host cell. In terms of assembly, homohexamer. Homoheptamer. Interacts with protease NS2. As to quaternary structure, homodimer. Interacts with host SPCS1; this interaction is essential for viral particle assembly. Interacts with envelope glycoprotein E1. Interacts with envelope glycoprotein E2. Interacts with viroporin p7. Interacts with serine protease/helicase NS3. Part of the replication complex composed of NS2, NS3, NS4A, NS4B, NS5A and the RNA-directed RNA polymerase embedded in an ER-derived membranous web. Part of the viral assembly initiation complex composed of NS2, E1, E2, NS3, NS4A, NS5A and the mature core protein. Interacts with host NEURL3; this interaction prevents E1 binding to glycoprotein E2. Interacts with protease NS2. Interacts with non-structural protein 4A; this interaction stabilizes the folding of NS3 serine protease. NS3-NS4A interaction is essential for NS3 activation and allows membrane anchorage of the latter. NS3/NS4A complex also prevents phosphorylation of host IRF3, thus preventing the establishment of dsRNA induced antiviral state. Interacts with host MAVS; this interaction leads to the cleavage and inhibition of host MAVS. Interacts with host TICAM1; this interaction leads to the cleavage and inhibition of host TICAM1. Interacts with host TANK-binding kinase/TBK1; this interaction results in the inhibition of the association between TBK1 and IRF3, which leads to the inhibition of IRF3 activation. Interacts with host RBM24. Part of the replication complex composed of NS2, NS3, NS4A, NS4B, NS5A and the RNA-directed RNA polymerase embedded in an ER-derived membranous web. Part of the viral assembly initiation complex composed of NS2, E1, E2, NS3, NS4A, NS5A and the mature core protein. In terms of assembly, interacts with NS3 serine protease; this interaction stabilizes the folding of NS3 serine protease. NS3-NS4A interaction is essential for NS3 activation and allows membrane anchorage of the latter. Interacts with non-structural protein 5A (via N-terminus). Part of the replication complex composed of NS2, NS3, NS4A, NS4B, NS5A and the RNA-directed RNA polymerase embedded in an ER-derived membranous web. Part of the viral assembly initiation complex composed of NS2, E1, E2, NS3, NS4A, NS5A and the mature core protein. As to quaternary structure, homomultimer. Interacts with non-structural protein NS5A. Interacts with host PLA2G4C; this interaction likely initiates the recruitment of replication complexes to lipid droplets. Interacts with host STING; this interaction disrupts the interaction between STING and TBK1 thereby suppressing the interferon signaling. Part of the replication complex composed of NS2, NS3, NS4A, NS4B, NS5A and the RNA-directed RNA polymerase embedded in an ER-derived membranous web. Monomer. Homodimer; dimerization is required for RNA-binding. Interacts with the mature core protein. Interacts (via N-terminus) with non-structural protein 4A. Interacts with non-structural protein 4B. Interacts (via region D2) with RNA-directed RNA polymerase. Part of the viral assembly initiation complex composed of NS2, E1, E2, NS3, NS4A, NS5A and the mature core protein. Part of the replication complex composed of NS2, NS3, NS4A, NS4B, NS5A and the RNA-directed RNA polymerase embedded in an ER-derived membranous web. Interacts with host GRB2. Interacts with host BIN1. Interacts with host PIK3R1. Interacts with host SRCAP. Interacts with host FKBP8. Interacts (via C-terminus) with host VAPB (via MSP domain). Interacts with host EIF2AK2/PKR; this interaction leads to disruption of EIF2AK2 dimerization by NS5A and probably allows the virus to evade the innate immune response. Interacts (via N-terminus) with host PACSIN2 (via N-terminus); this interaction attenuates protein kinase C alpha-mediated phosphorylation of PACSIN2 by disrupting the interaction between PACSIN2 and PRKCA. Interacts (via N-terminus) with host SRC kinase (via SH2 domain). Interacts with most Src-family kinases. Interacts with host IFI27 and SKP2; promotes the ubiquitin-mediated proteasomal degradation of NS5A. Interacts with host GPS2. Interacts with host TNFRSF21; this interaction allows the modulation by the virus of JNK, p38 MAPK, STAT3, and Akt signaling pathways in a DR6-dependent manner. Interacts (via N-terminus) with host CIDEB (via N-terminus); this interaction seems to regulate the association of HCV particles with APOE. Interacts with host CHKA/Choline Kinase-alpha; CHKA bridges host PI4KA and NS5A and potentiates NS5A-stimulated PI4KA activity, which then facilitates the targeting of the ternary complex to the ER for viral replication. Interacts with host SPSB2 (via C-terminus); this interaction targets NS5A for ubiquitination and degradation. Interacts with host RAB18; this interaction may promote the association of NS5A and other replicase components with lipid droplets. Interacts (via region D2) with host PPIA/CYPA; the interaction stimulates RNA-binding ability of NS5A and is dependent on the peptidyl-prolyl cis-trans isomerase activity of PPIA/CYPA. Interacts with host TRIM14; this interaction induces the degradation of NS5A. In terms of assembly, homooligomer. Interacts with non-structural protein 5A. Interacts with host VAPB. Interacts with host PRK2/PKN2. Interacts with host HNRNPA1 and SEPT6; these interactions facilitate the viral replication. Part of the replication complex composed of NS2, NS3, NS4A, NS4B, NS5A and the RNA-directed RNA polymerase embedded in an ER-derived membranous web. Zn(2+) serves as cofactor. The cofactor is Mg(2+). In terms of processing, specific enzymatic cleavages in vivo yield mature proteins. The structural proteins, core, E1, E2 and p7 are produced by proteolytic processing by host signal peptidases. The core protein is synthesized as a 23 kDa precursor which is retained in the ER membrane through the hydrophobic signal peptide. Cleavage by the signal peptidase releases the 21 kDa mature core protein. The cleavage of the core protein precursor occurs between aminoacids 176 and 188 but the exact cleavage site is not known. Some degraded forms of the core protein appear as well during the course of infection. The other proteins (p7, NS2, NS3, NS4A, NS4B, NS5A and NS5B) are cleaved by the viral proteases. Autoprocessing between NS2 and NS3 is mediated by the NS2 cysteine protease catalytic domain and regulated by the NS3 N-terminal domain. Post-translationally, phosphorylated by host PKC and PKA. Ubiquitinated; mediated by UBE3A and leading to core protein subsequent proteasomal degradation. In terms of processing, highly N-glycosylated. Post-translationally, palmitoylation is required for NS2/3 autoprocessing and E2 recruitment to membranes. Palmitoylated. This modification may play a role in its polymerization or in protein-protein interactions. In terms of processing, cleaved by host caspases which arec probably activated by the viral infection. Post-translationally, ubiquitinated. Ubiquitination, most probably at Lys-2350, mediated by host IFI27 and SKP2 leads to proteasomal degradation, restricting viral infection. Phosphorylated on serines in a basal form termed p56. p58 is a hyperphosphorylated form of p56. p56 and p58 coexist in the cell in roughly equivalent amounts. Hyperphosphorylation is dependent on the presence of NS4A. Host CSNK1A1/CKI-alpha, PI4KA or RPS6KB1 kinases may be responsible for NS5A phosphorylation. Phosphorylated NS5A is involved in viral replication. In terms of processing, tyrosine phosphorylation is essential for the interaction with host SRC. Post-translationally, the N-terminus is phosphorylated by host PRK2/PKN2.

Its subcellular location is the host endoplasmic reticulum membrane. It is found in the host mitochondrion membrane. The protein localises to the virion. The protein resides in the host cytoplasm. It localises to the host nucleus. Its subcellular location is the host lipid droplet. It is found in the virion membrane. The protein localises to the host mitochondrion. The protein resides in the host cell membrane. It localises to the host perinuclear region. It catalyses the reaction Hydrolysis of four peptide bonds in the viral precursor polyprotein, commonly with Asp or Glu in the P6 position, Cys or Thr in P1 and Ser or Ala in P1'.. The catalysed reaction is a ribonucleoside 5'-triphosphate + H2O = a ribonucleoside 5'-diphosphate + phosphate + H(+). The enzyme catalyses ATP + H2O = ADP + phosphate + H(+). It carries out the reaction RNA(n) + a ribonucleoside 5'-triphosphate = RNA(n+1) + diphosphate. With respect to regulation, inhibited by the antiviral drug hexamethylene amiloride. Inhibition by amantadine appears to be genotype-dependent. Also inhibited by long-alkyl-chain iminosugar derivatives. Its activity is regulated as follows. Activity is up-regulated by PRK2/PKN2-mediated phosphorylation. Packages viral RNA to form a viral nucleocapsid, and promotes virion budding. Participates in the viral particle production as a result of its interaction with the non-structural protein 5A. Binds RNA and may function as a RNA chaperone to induce the RNA structural rearrangements taking place during virus replication. Modulates viral translation initiation by interacting with viral IRES and 40S ribosomal subunit. Affects various cell signaling pathways, host immunity and lipid metabolism. Prevents the establishment of cellular antiviral state by blocking the interferon-alpha/beta (IFN-alpha/beta) and IFN-gamma signaling pathways and by blocking the formation of phosphorylated STAT1 and promoting ubiquitin-mediated proteasome-dependent degradation of STAT1. Activates STAT3 leading to cellular transformation. Regulates the activity of cellular genes, including c-myc and c-fos. May repress the promoter of p53, and sequester CREB3 and SP110 isoform 3/Sp110b in the cytoplasm. Represses cell cycle negative regulating factor CDKN1A, thereby interrupting an important check point of normal cell cycle regulation. Targets transcription factors involved in the regulation of inflammatory responses and in the immune response: suppresses NF-kappa-B activation, and activates AP-1. Binds to dendritic cells (DCs) via C1QR1, resulting in down-regulation of T-lymphocytes proliferation. Alters lipid metabolism by interacting with hepatocellular proteins involved in lipid accumulation and storage. Induces up-regulation of FAS promoter activity, and thereby contributes to the increased triglyceride accumulation in hepatocytes (steatosis). Its function is as follows. Forms a heterodimer with envelope glycoprotein E2, which mediates virus attachment to the host cell, virion internalization through clathrin-dependent endocytosis and fusion with host membrane. Fusion with the host cell is most likely mediated by both E1 and E2, through conformational rearrangements of the heterodimer required for fusion rather than a classical class II fusion mechanism. E1/E2 heterodimer binds host apolipoproteins such as APOB and APOE thereby forming a lipo-viro-particle (LVP). APOE associated to the LVP allows the initial virus attachment to cell surface receptors such as the heparan sulfate proteoglycans (HSPGs), syndecan-1 (SDC1), syndecan-1 (SDC2), the low-density lipoprotein receptor (LDLR) and scavenger receptor class B type I (SCARB1). The cholesterol transfer activity of SCARB1 allows E2 exposure and binding of E2 to SCARB1 and the tetraspanin CD81. E1/E2 heterodimer binding on CD81 activates the epithelial growth factor receptor (EGFR) signaling pathway. Diffusion of the complex E1-E2-EGFR-SCARB1-CD81 to the cell lateral membrane allows further interaction with Claudin 1 (CLDN1) and occludin (OCLN) to finally trigger HCV entry. In terms of biological role, forms a heterodimer with envelope glycoprotein E1, which mediates virus attachment to the host cell, virion internalization through clathrin-dependent endocytosis and fusion with host membrane. Fusion with the host cell is most likely mediated by both E1 and E2, through conformational rearrangements of the heterodimer required for fusion rather than a classical class II fusion mechanism. The interaction between envelope glycoprotein E2 and host apolipoprotein E/APOE allows the proper assembly, maturation and infectivity of the viral particles. This interaction is probably promoted via the up-regulation of cellular autophagy by the virus. E1/E2 heterodimer binds host apolipoproteins such as APOB and APOE thereby forming a lipo-viro-particle (LVP). APOE associated to the LVP allows the initial virus attachment to cell surface receptors such as the heparan sulfate proteoglycans (HSPGs), syndecan-1 (SDC1), syndecan-1 (SDC2), the low-density lipoprotein receptor (LDLR) and scavenger receptor class B type I (SCARB1). The cholesterol transfer activity of SCARB1 allows E2 exposure and binding of E2 to SCARB1 and the tetraspanin CD81. E1/E2 heterodimer binding on CD81 activates the epithelial growth factor receptor (EGFR) signaling pathway. Diffusion of the complex E1-E2-EGFR-SCARB1-CD81 to the cell lateral membrane allows further interaction with Claudin 1 (CLDN1) and occludin (OCLN) to finally trigger HCV entry. Inhibits host EIF2AK2/PKR activation, preventing the establishment of an antiviral state. Viral ligand for CD209/DC-SIGN and CLEC4M/DC-SIGNR, which are respectively found on dendritic cells (DCs), and on liver sinusoidal endothelial cells and macrophage-like cells of lymph node sinuses. These interactions allow the capture of circulating HCV particles by these cells and subsequent facilitated transmission to permissive cells such as hepatocytes and lymphocyte subpopulations. The interaction between E2 and host amino acid transporter complex formed by SLC3A2 and SLC7A5/LAT1 may facilitate viral entry into host cell. Functionally, ion channel protein that acts as a viroporin and plays an essential role in the assembly, envelopment and secretion of viral particles. Regulates the host cell secretory pathway, which induces the intracellular retention of viral glycoproteins and favors assembly of viral particles. Creates a pore in acidic organelles and releases Ca(2+) and H(+) in the cytoplasm of infected cells, leading to a productive viral infection. High levels of cytoplasmic Ca(2+) may trigger membrane trafficking and transport of viral ER-associated proteins to viroplasms, sites of viral genome replication. This ionic imbalance induces the assembly of the inflammasome complex, which triggers the maturation of pro-IL-1beta into IL-1beta through the action of caspase-1. Targets also host mitochondria and induces mitochondrial depolarization. In addition of its role as a viroporin, acts as a lipid raft adhesion factor. Cysteine protease required for the proteolytic auto-cleavage between the non-structural proteins NS2 and NS3. The N-terminus of NS3 is required for the function of NS2 protease (active region NS2-3). Promotes the initiation of viral particle assembly by mediating the interaction between structural and non-structural proteins. Its function is as follows. Displays three enzymatic activities: serine protease with a chymotrypsin-like fold, NTPase and RNA helicase. NS3 serine protease, in association with NS4A, is responsible for the cleavages of NS3-NS4A, NS4A-NS4B, NS4B-NS5A and NS5A-NS5B. The NS3/NS4A complex prevents phosphorylation of host IRF3, thus preventing the establishment of dsRNA induced antiviral state. The NS3/NS4A complex induces host amino acid transporter component SLC3A2, thus contributing to HCV propagation. NS3 RNA helicase binds to RNA and unwinds both dsDNA and dsRNA in the 3' to 5' direction, and likely resolves RNA complicated stable secondary structures in the template strand. Binds a single ATP and catalyzes the unzipping of a single base pair of dsRNA. Inhibits host antiviral proteins TBK1 and IRF3 thereby preventing the establishment of an antiviral state. Cleaves host MAVS/CARDIF thereby preventing the establishment of an antiviral state. Cleaves host TICAM1/TRIF, thereby disrupting TLR3 signaling and preventing the establishment of an antiviral state. In terms of biological role, peptide cofactor which forms a non-covalent complex with the N-terminal of NS3 serine protease. The NS3/NS4A complex prevents phosphorylation of host IRF3, thus preventing the establishment of dsRNA induced antiviral state. The NS3/NS4A complex induces host amino acid transporter component SLC3A2, thus contributing to HCV propagation. Functionally, induces a specific membrane alteration that serves as a scaffold for the virus replication complex. This membrane alteration gives rise to the so-called ER-derived membranous web that contains the replication complex. NS4B self-interaction contributes to its function in membranous web formation. Promotes host TRIF protein degradation in a CASP8-dependent manner thereby inhibiting host TLR3-mediated interferon signaling. Disrupts the interaction between STING and TBK1 contributing to the inhibition of interferon signaling. Phosphorylated protein that is indispensable for viral replication and assembly. Both hypo- and hyperphosphorylated states are required for the viral life cycle. The hyperphosphorylated form of NS5A is an inhibitor of viral replication. Involved in RNA-binding and especially in binding to the viral genome. Zinc is essential for RNA-binding. Participates in the viral particle production as a result of its interaction with the viral mature core protein. Its interaction with host VAPB may target the viral replication complex to vesicles. Down-regulates viral IRES translation initiation. Mediates interferon resistance, presumably by interacting with and inhibiting host EIF2AK2/PKR. Prevents BIN1-induced apoptosis. Acts as a transcriptional activator of some host genes important for viral replication when localized in the nucleus. Via the interaction with host PACSIN2, modulates lipid droplet formation in order to promote virion assembly. Modulates TNFRSF21/DR6 signaling pathway for viral propagation. Its function is as follows. RNA-dependent RNA polymerase that performs primer-template recognition and RNA synthesis during viral replication. Initiates RNA transcription/replication at a flavin adenine dinucleotide (FAD), resulting in a 5'- FAD cap on viral RNAs. In this way, recognition of viral 5' RNA by host pattern recognition receptors can be bypassed, thereby evading activation of antiviral pathways. In Homo sapiens (Human), this protein is Genome polyprotein.